Reading from the N-terminus, the 86-residue chain is Cell division topological specificity factor (86 aa).

This sequence belongs to the MinE family.

Its function is as follows. Prevents the cell division inhibition by proteins MinC and MinD at internal division sites while permitting inhibition at polar sites. This ensures cell division at the proper site by restricting the formation of a division septum at the midpoint of the long axis of the cell. In Shewanella halifaxensis (strain HAW-EB4), this protein is Cell division topological specificity factor.